Consider the following 64-residue polypeptide: Prokaryotic ubiquitin-like protein Pup (64 aa).

Basic and acidic residues-rich tracts occupy residues 1-11 (MAQEQTKRTGG) and 25-34 (GQERREKLAE). The segment at 1–38 (MAQEQTKRTGGGDEDEGSAGPEAAGQERREKLAEDTDD) is disordered. Residues 21–58 (PEAAGQERREKLAEDTDDLLDEIDDVLEENAEDFVRAY) form an ARC ATPase binding region. Positions 24–52 (AGQERREKLAEDTDDLLDEIDDVLEENAE) form a coiled coil. Gln-64 is subject to Deamidated glutamine. Gln-64 participates in a covalent cross-link: Isoglutamyl lysine isopeptide (Gln-Lys) (interchain with K-? in acceptor proteins).

This sequence belongs to the prokaryotic ubiquitin-like protein family. In terms of assembly, strongly interacts with the proteasome-associated ATPase ARC through a hydrophobic interface; the interacting region of Pup lies in its C-terminal half. There is one Pup binding site per ARC hexamer ring. Is modified by deamidation of its C-terminal glutamine to glutamate by the deamidase Dop, a prerequisite to the subsequent pupylation process.

The protein operates within protein degradation; proteasomal Pup-dependent pathway. In terms of biological role, protein modifier that is covalently attached to lysine residues of substrate proteins, thereby targeting them for proteasomal degradation. The tagging system is termed pupylation. The protein is Prokaryotic ubiquitin-like protein Pup of Nocardia farcinica (strain IFM 10152).